We begin with the raw amino-acid sequence, 688 residues long: Telomere length regulation protein TEL2 (688 aa).

Phosphoserine is present on residues Ser417 and Ser419.

Belongs to the TEL2 family. Component of the TTT complex composed of TEL2, TTI1 and TTI2. Interacts with TTI1 and TTI2.

The protein localises to the nucleus. The protein resides in the chromosome. It localises to the telomere. Its function is as follows. Part of the TTT complex that is required to stabilize protein levels of the phosphatidylinositol 3-kinase-related protein kinase (PIKK) family proteins. Required for telomere length regulation and telomere position effect. Regulates telomere length and participates in gene silencing at subtelomeric regions. Binds to telomeric DNA repeats. This chain is Telomere length regulation protein TEL2 (TEL2), found in Saccharomyces cerevisiae (strain ATCC 204508 / S288c) (Baker's yeast).